We begin with the raw amino-acid sequence, 469 residues long: Putative dipeptidase SSP1012 (469 aa).

Histidine 84 serves as a coordination point for Zn(2+). The active site involves aspartate 86. Zn(2+) is bound at residue aspartate 115. Glutamate 149 serves as the catalytic Proton acceptor. 3 residues coordinate Zn(2+): glutamate 150, aspartate 173, and histidine 440.

This sequence belongs to the peptidase M20A family. Requires Zn(2+) as cofactor.

This Staphylococcus saprophyticus subsp. saprophyticus (strain ATCC 15305 / DSM 20229 / NCIMB 8711 / NCTC 7292 / S-41) protein is Putative dipeptidase SSP1012.